The following is a 518-amino-acid chain: Nuclear receptor ROR-gamma (518 aa).

The interval 1-30 (MDRAPQRQHRASRELLAAKKTHTSQIEVIP) is modulating. 2 consecutive NR C4-type zinc fingers follow at residues 31-51 (CKIC…CEGC) and 67-91 (CTRQ…LQKC). The segment at residues 31–96 (CKICGDKSSG…RLQKCLALGM (66 aa)) is a DNA-binding region (nuclear receptor). Disordered stretches follow at residues 105-183 (RMSK…SGSG) and 238-258 (HPGL…SFRS). Residues 109–118 (KQRDSLHAEV) are compositionally biased toward basic and acidic residues. Residues 119 to 130 (QKQLQQRQQQQQ) are compositionally biased toward low complexity. Residues 269–508 (EIEHLVQSVC…PPLYKELFST (240 aa)) enclose the NR LBD domain. The short motif at 501-506 (LYKELF) is the AF-2 element.

Belongs to the nuclear hormone receptor family. NR1 subfamily. In terms of assembly, interacts (via AF-2 motif) with the coactivator NCOA2 (via LXXLL motif). Interacts with the corepressor NCOR1. Interacts with CRY1. Interacts (via AF-2 motif) with the coactivators NCOA1 and PPARGC1A (via LXXLL motif). Interacts (via AF-2 motif) with PROX1. Interacts with FOXP3. Interacts with NR0B2. Isoform 1 is widely expressed in many tissues, including liver and adipose, and highly expressed in skeletal muscle. Isoform 2 is primarily expressed in immature thymocytes.

The protein localises to the nucleus. Functionally, nuclear receptor that binds DNA as a monomer to ROR response elements (RORE) containing a single core motif half-site 5'-AGGTCA-3' preceded by a short A-T-rich sequence. Key regulator of cellular differentiation, immunity, peripheral circadian rhythm as well as lipid, steroid, xenobiotics and glucose metabolism. Considered to have intrinsic transcriptional activity, have some natural ligands like oxysterols that act as agonists (25-hydroxycholesterol) or inverse agonists (7-oxygenated sterols), enhancing or repressing the transcriptional activity, respectively. Recruits distinct combinations of cofactors to target gene regulatory regions to modulate their transcriptional expression, depending on the tissue, time and promoter contexts. Regulates the circadian expression of clock genes such as CRY1, BMAL1 and NR1D1 in peripheral tissues and in a tissue-selective manner. Competes with NR1D1 for binding to their shared DNA response element on some clock genes such as BMAL1, CRY1 and NR1D1 itself, resulting in NR1D1-mediated repression or RORC-mediated activation of the expression, leading to the circadian pattern of clock genes expression. Therefore influences the period length and stability of the clock. Involved in the regulation of the rhythmic expression of genes involved in glucose and lipid metabolism, including PLIN2 and AVPR1A. Negative regulator of adipocyte differentiation through the regulation of early phase genes expression, such as MMP3. Controls adipogenesis as well as adipocyte size and modulates insulin sensitivity in obesity. In liver, has specific and redundant functions with RORA as positive or negative modulator of expression of genes encoding phase I and Phase II proteins involved in the metabolism of lipids, steroids and xenobiotics, such as SULT1E1. Also plays a role in the regulation of hepatocyte glucose metabolism through the regulation of G6PC1 and PCK1. Regulates the rhythmic expression of PROX1 and promotes its nuclear localization. Plays an indispensable role in the induction of IFN-gamma dependent anti-mycobacterial systemic immunity. In terms of biological role, essential for thymopoiesis and the development of several secondary lymphoid tissues, including lymph nodes and Peyer's patches. Required for the generation of LTi (lymphoid tissue inducer) cells. Regulates thymocyte survival through DNA-binding on ROREs of target gene promoter regions and recruitment of coactivaros via the AF-2. Also plays a key role, downstream of IL6 and TGFB and synergistically with RORA, for lineage specification of uncommitted CD4(+) T-helper (T(H)) cells into T(H)17 cells, antagonizing the T(H)1 program. Probably regulates IL17 and IL17F expression on T(H) by binding to the essential enhancer conserved non-coding sequence 2 (CNS2) in the IL17-IL17F locus. May also play a role in the pre-TCR activation cascade leading to the maturation of alpha/beta T-cells and may participate in the regulation of DNA accessibility in the TCR-J(alpha) locus. The protein is Nuclear receptor ROR-gamma (RORC) of Homo sapiens (Human).